The primary structure comprises 160 residues: uncharacterized protein (160 aa).

The first 27 residues, 1–27, serve as a signal peptide directing secretion; the sequence is MVIGRKAGIIIYVMHALLLLLLSFTFA.

This is an uncharacterized protein from Aquifex aeolicus (strain VF5).